A 280-amino-acid chain; its full sequence is MPTSTPSPVFGNQEFHYTREDFQQVRERLYRLTGISLAESKAQLVYSRLSRRLRLLRLGSFAEYFTHLDREPGEQQLFVNALTTNLTAFFRERHHFPLLADLARRQLQRHRPLRIWSAAASTGEEPYSIAITLVEALGSFDPPVKIVASDIDTGVLDCARQGVYPLERLEQMPAPLKKRFFLRGTGPNAGKARVVEELRQLVEFRQINLLEADWSIAGELDAIFCRNVMIYFDKPTQTRLLERMVALLRPEGLFFAGHSENFVHASHLVRSVGQTVYSPA.

The CheR-type methyltransferase domain occupies 10–280 (FGNQEFHYTR…SVGQTVYSPA (271 aa)). S-adenosyl-L-methionine-binding positions include Asn-85, Thr-87, Arg-91, Glu-125, Asp-150, 208-209 (NL), and 226-227 (RN).

In terms of assembly, interacts with the C-terminal pentapeptide GWEEF of the methyl-accepting chemotaxis protein McpB.

The enzyme catalyses L-glutamyl-[protein] + S-adenosyl-L-methionine = [protein]-L-glutamate 5-O-methyl ester + S-adenosyl-L-homocysteine. Its function is as follows. Methylation of the methyl-accepting chemotaxis proteins (MCP) to form gamma-glutamyl methyl ester residues in MCP. It specifically targets the McpB chemoreceptor. In Pseudomonas aeruginosa (strain ATCC 15692 / DSM 22644 / CIP 104116 / JCM 14847 / LMG 12228 / 1C / PRS 101 / PAO1), this protein is Chemotaxis protein methyltransferase 2.